The following is a 60-amino-acid chain: Small ribosomal subunit protein bS21 (60 aa).

The disordered stretch occupies residues 41–60; sequence PEEKRKRKAIARRRQRSRRR. Basic residues predominate over residues 45-60; that stretch reads RKRKAIARRRQRSRRR.

This sequence belongs to the bacterial ribosomal protein bS21 family.

This chain is Small ribosomal subunit protein bS21, found in Gloeothece citriformis (strain PCC 7424) (Cyanothece sp. (strain PCC 7424)).